A 618-amino-acid polypeptide reads, in one-letter code: Ubiquitin carboxyl-terminal hydrolase 2 (618 aa).

Residues 1 to 213 (MSQLSSTLKR…RSEYLTDYLE (213 aa)) form a necessary for interaction with MDM4 region. 2 disordered regions span residues 54-112 (VSPT…GGSG) and 246-274 (RYTL…MNSK). A compositionally biased stretch (basic and acidic residues) spans 90–100 (KRSESQTRGNE). The segment covering 255–274 (GQASGPSRSTSPGRDTMNSK) has biased composition (polar residues). Residues 280–612 (AGLRNLGNTC…DAYLLFYELA (333 aa)) enclose the USP domain. C289 functions as the Nucleophile in the catalytic mechanism. A necessary for interaction with MDM4 region spans residues 416–516 (YLEREDSRIG…FPKILVLHLK (101 aa)). Zn(2+)-binding residues include C438, C441, C489, and C492. H570 serves as the catalytic Proton acceptor.

This sequence belongs to the peptidase C19 family. USP2 subfamily. Homooligomer. Found in trimeric complex with MDM2 and MDM4 and USP2. Interacts with CCND1; the interaction is direct and promotes its stabilization by antagonizing ubiquitin-dependent degradation. Interacts (via N-terminus and C-terminus) with MDM2. Interacts with MDM4. Interacts with PER1. Interacts with KCNQ1; counteracts the NEDD4L-specific down-regulation of I(Ks) and restores plasma membrane localization of KCNQ1. Isoform 4: Interacts with NHERF4 and CLTC. Expressed in mesangial cells of the kidney. Isoform 1 and isoform 2 are expressed in elongated spermatids; the shorter form appearing earlier than the longer form (at protein level). Isoform 1 and isoform 2 are expressed in early round spermatids of the testis. Isoform 1 is expressed in muscle and heart. Isoform 2 is expressed in muscle, lung, heart, brain, liver and ovary. During muscle differentiation, isoform 1 expression increases before the onset of membrane fusion and decreases as the myogenic processes proceeded; un counterpart, isoform 2 expression remains low until the burst of membrane fusion but increases thereafter.

Its subcellular location is the cytoplasm. It localises to the perinuclear region. The protein localises to the nucleus. The protein resides in the membrane. It catalyses the reaction Thiol-dependent hydrolysis of ester, thioester, amide, peptide and isopeptide bonds formed by the C-terminal Gly of ubiquitin (a 76-residue protein attached to proteins as an intracellular targeting signal).. With respect to regulation, cleavage is inhibited by ubiquitin in a dosage-dependent manner. Cleavage is blocked by ubiquitin aldehyde. Hydrolase that deubiquitinates polyubiquitinated target proteins such as MDM2, MDM4 and CCND1. Isoform 1 and isoform 2 possess both ubiquitin-specific peptidase and isopeptidase activities. Deubiquitinates MDM2 without reversing MDM2-mediated p53/TP53 ubiquitination and thus indirectly promotes p53/TP53 degradation and limits p53 activity. Has no deubiquitinase activity against p53/TP53. Prevents MDM2-mediated degradation of MDM4. Plays a role in the G1/S cell-cycle progression in normal and cancer cells. Regulates the circadian clock by modulating its intrinsic circadian rhythm and its capacity to respond to external cues. Associates with clock proteins and deubiquitinates core clock component PER1 but does not affect its overall stability. Regulates the nucleocytoplasmic shuttling and nuclear retention of PER1 and its repressive role on the clock transcription factors CLOCK and BMAL1. Plays a role in the regulation of myogenic differentiation of embryonic muscle cells. In terms of biological role, circadian clock output effector that regulates Ca(2+) absorption in the small intestine. Probably functions by regulating protein levels of the membrane scaffold protein NHERF4 in a rhythmic manner, and is therefore likely to control Ca(2+) membrane permeability mediated by the Ca(2+) channel TRPV6 in the intestine. The polypeptide is Ubiquitin carboxyl-terminal hydrolase 2 (Usp2) (Rattus norvegicus (Rat)).